The chain runs to 1914 residues: Fatty acid synthase beta subunit stcK (1914 aa).

The interval 17–395 is acetyltransferase (AT) domain; the sequence is LYACFGGQGP…LEGTGMNVVN (379 aa). The interval 446 to 692 is enoyl reductase (ER) domain; that stretch reads TRLLGTPHVM…LIVEAPGVKD (247 aa). The tract at residues 1009-1509 is dehydratase (DH) domain; that stretch reads GECAWGYAAL…RANDRLRMEI (501 aa). Residues 1398–1532 form the MaoC-like domain; sequence FLNRHGAPRV…VRVLKESTGE (135 aa). The interval 1548 to 1900 is malonyl/palmitoyl transferase (MT/PT) domain; the sequence is YVFTGQGTQE…IRLVQGVTQS (353 aa).

It belongs to the fungal fatty acid synthetase subunit beta family. As to quaternary structure, [Alpha(6)beta(6)] hexamers of two multifunctional subunits (alpha and beta).

It carries out the reaction acetyl-CoA + n malonyl-CoA + 2n NADPH + 4n H(+) = a long-chain-acyl-CoA + n CoA + n CO2 + 2n NADP(+).. The enzyme catalyses holo-[ACP] + acetyl-CoA = acetyl-[ACP] + CoA. It catalyses the reaction holo-[ACP] + malonyl-CoA = malonyl-[ACP] + CoA. The catalysed reaction is a (3R)-hydroxyacyl-[ACP] = a (2E)-enoyl-[ACP] + H2O. It carries out the reaction a 2,3-saturated acyl-[ACP] + NAD(+) = a (2E)-enoyl-[ACP] + NADH + H(+). The enzyme catalyses (9Z)-octadecenoyl-[ACP] + H2O = (9Z)-octadecenoate + holo-[ACP] + H(+). It functions in the pathway mycotoxin biosynthesis; sterigmatocystin biosynthesis. Its function is as follows. Fatty acid synthase beta subunit; part of the gene cluster that mediates the biosynthesis of sterigmatocystin (ST), a polyketide-derived furanocoumarin which is part of the most toxic and carcinogenic compounds among the known mycotoxins. The first step in the biosynthesis of sterigmatocystin is the production of hexanoate by the fatty acid synthase (FAS) units stcJ and stcK. The polyketide backbone is assembled by the non-reducing polyketide synthase stcA by condensation of the starter hexanoyl-CoA and 7 malonyl-CoA extender units followed by cyclization and release of norsolorinic acid. Norsolorinic acid is the first stable intermediate in the biosynthesis of sterigmatocystin and is converted into averantin (AVN) by the ketoreductase stcE which reduces the hexanoate ketone to an alcohol. Averantin is then oxidized into 5'-hydroxyaverantin (HAVN) by the cytochrome P450 monooxygenase stcF. 5'-hydroxyaverantin is further converted to 5'-oxyaverantin (OAVN) by the 5'-hydroxyaverantin dehydrogenase stcG. The next step is the conversion of OAVN into averufin (AVF) which is catalyzed by a yet to be identified enzyme. The cytochrome P450 monooxygenase stcB and the flavin-binding monooxygenase stcW are both required for the conversion of averufin to 1-hydroxyversicolorone. The esterase stcI probably catalyzes the formation of versiconal hemiacetal acetate from 1-hydroxyversicolorone. The oxydoreductase stcN then probably catalyzes the biosynthetic step from versiconal to versicolorin B (VERB). The next step is performed by the versicolorin B desaturase stcL to produce versicolorin A (VERA). The ketoreductase stcU and the cytochrome P450 monooxygenase stcS are involved in the conversion of versicolorin A to demethylsterigmatocystin. The Baeyer-Villiger oxidas stcQ and the reductase stcR might be involved in the biosynthetic step from versicolorin A to demethylsterigmatocystin. The final step in the biosynthesis of sterigmatocystin is the methylation of demethylsterigmatocystin catalyzed by the methyltransferase stcP. In Emericella nidulans (strain FGSC A4 / ATCC 38163 / CBS 112.46 / NRRL 194 / M139) (Aspergillus nidulans), this protein is Fatty acid synthase beta subunit stcK.